We begin with the raw amino-acid sequence, 279 residues long: MQGPHAQMTDAAYEIRRSEIAALSTDLAPEDPIPVVEYTEWEHEVWRTVCVDLTARHRTDAAAEYLESAEQLAVPLDHVPQLRDVSGRLGSISGFTFQSAPALVPLREFCGGLANSVFHSTQYLRHPRSPFYTEDPDLLHDLVGHGNVLASDRFARLYRLAGNAAARVHSTEALQFIGKVFWFTLECGVVRERGERKAYGATLVSSYGELDHFRSADFRPLDIKSLADVEYDISTYQPILFEADSMDEVEDTVGSFWDTCDDDSIAALLGGTSRSVTPH.

Fe cation contacts are provided by His140, His145, and Glu186.

It belongs to the biopterin-dependent aromatic amino acid hydroxylase family. Fe(2+) serves as cofactor.

It carries out the reaction (6R)-L-erythro-5,6,7,8-tetrahydrobiopterin + L-phenylalanine + O2 = 3-hydroxy-L-phenylalanine + (4aS,6R)-4a-hydroxy-L-erythro-5,6,7,8-tetrahydrobiopterin. Functionally, in vitro, catalyzes the highly regiospecific C-3 hydroxylation of L-phenylalanine (L-Phe) to yield 3-hydroxy-L-phenylalanine (meta-Tyr), an amino acid found in bacterial secondary metabolites such as sanglifehrin A and some pacidamycins. Tetrahydrobiopterin (BH4) seems to be the physiological pterin, however the hydroxylase is also able to use 6-methyltetrahydropterin (6-MePH4). This is Phenylalanine 3-hydroxylase from Streptomyces coeruleorubidus.